The following is a 565-amino-acid chain: NAD-dependent malic enzyme (565 aa).

The Proton donor role is filled by Y104. R157 provides a ligand contact to NAD(+). Residue K175 is the Proton acceptor of the active site. E246, D247, and D270 together coordinate a divalent metal cation. Positions 270 and 418 each coordinate NAD(+).

This sequence belongs to the malic enzymes family. As to quaternary structure, homotetramer. Requires Mg(2+) as cofactor. Mn(2+) serves as cofactor.

The catalysed reaction is (S)-malate + NAD(+) = pyruvate + CO2 + NADH. It catalyses the reaction oxaloacetate + H(+) = pyruvate + CO2. In Escherichia coli O9:H4 (strain HS), this protein is NAD-dependent malic enzyme.